A 679-amino-acid chain; its full sequence is NADPH--cytochrome P450 reductase (679 aa).

Residues 1-21 (MASEQTIDGAAAIPSGGGDEP) are Lumenal-facing. A helical membrane pass occupies residues 22–42 (FLGLLDVALLAVLIGGAAFYF). Residues 43 to 679 (LRSRKKEEEP…QKRYSADVWS (637 aa)) lie on the Cytoplasmic side of the membrane. Residues 84-228 (LVVFYGSQTG…DFITWKDRFW (145 aa)) enclose the Flavodoxin-like domain. Residues 90-95 (SQTGTG), 142-145 (ATYG), 177-186 (LGNKTYEHYN), and Asp-212 contribute to the FMN site. Positions 283–523 (KNPFLAPIKV…FIRKSQFRLP (241 aa)) constitute an FAD-binding FR-type domain. NADP(+) is bound at residue Arg-302. Residues 458-461 (RYYS), 476-478 (TAV), Tyr-482, and 492-495 (GVAT) contribute to the FAD site. Residues Thr-537, 597 to 598 (SR), 603 to 607 (KVYVQ), and Asp-640 contribute to the NADP(+) site. FAD is bound at residue Trp-678.

The protein belongs to the NADPH--cytochrome P450 reductase family. It in the N-terminal section; belongs to the flavodoxin family. In the C-terminal section; belongs to the flavoprotein pyridine nucleotide cytochrome reductase family. Interacts with sturkopf. The cofactor is FAD. FMN is required as a cofactor. High in antennae.

Its subcellular location is the endoplasmic reticulum membrane. It catalyses the reaction 2 oxidized [cytochrome P450] + NADPH = 2 reduced [cytochrome P450] + NADP(+) + H(+). Its function is as follows. This enzyme is required for electron transfer from NADP to cytochrome p450 in microsomes. It can also provide electron transfer to heme oxygenase and cytochrome b5. May function to clear the olfactory organ (antennae) from accumulating chemicals. This is NADPH--cytochrome P450 reductase (Cpr) from Drosophila melanogaster (Fruit fly).